Consider the following 259-residue polypeptide: 7-cyano-7-deazaguanine synthase (259 aa).

ATP is bound at residue 32–42 (LSGGLDSVTCL). The Zn(2+) site is built by Cys223, Cys233, Cys236, and Cys239.

Belongs to the QueC family. The cofactor is Zn(2+).

The enzyme catalyses 7-carboxy-7-deazaguanine + NH4(+) + ATP = 7-cyano-7-deazaguanine + ADP + phosphate + H2O + H(+). It participates in purine metabolism; 7-cyano-7-deazaguanine biosynthesis. Catalyzes the ATP-dependent conversion of 7-carboxy-7-deazaguanine (CDG) to 7-cyano-7-deazaguanine (preQ(0)). The chain is 7-cyano-7-deazaguanine synthase from Psychrobacter arcticus (strain DSM 17307 / VKM B-2377 / 273-4).